Here is a 227-residue protein sequence, read N- to C-terminus: 2,3-bisphosphoglycerate-dependent phosphoglycerate mutase (227 aa).

Substrate is bound by residues 8 to 15 (RHGKSVWN), 21 to 22 (TG), arginine 58, 110 to 113 (ERMY), lysine 121, 137 to 138 (RR), and 181 to 182 (GN). Residue histidine 9 is the Tele-phosphohistidine intermediate of the active site. Glutamate 110 functions as the Proton donor/acceptor in the catalytic mechanism.

This sequence belongs to the phosphoglycerate mutase family. BPG-dependent PGAM subfamily.

It catalyses the reaction (2R)-2-phosphoglycerate = (2R)-3-phosphoglycerate. The protein operates within carbohydrate degradation; glycolysis; pyruvate from D-glyceraldehyde 3-phosphate: step 3/5. Catalyzes the interconversion of 2-phosphoglycerate and 3-phosphoglycerate. The sequence is that of 2,3-bisphosphoglycerate-dependent phosphoglycerate mutase from Chlamydia abortus (strain DSM 27085 / S26/3) (Chlamydophila abortus).